The primary structure comprises 131 residues: Protein Bouncer (131 aa).

An N-terminal signal peptide occupies residues 1 to 26 (MGSLRTRQLFHAALLWLCLPLPLLLC). 4 disulfide bridges follow: C31-C56, C50-C74, C80-C99, and C100-C105. Positions 31–106 (CYYSPVLEKE…YSCCDWPYCN (76 aa)) constitute a UPAR/Ly6 domain. A glycan (N-linked (GlcNAc...) asparagine) is linked at N65. Residue N106 is the site of GPI-anchor amidated asparagine attachment. Positions 107 to 131 (RAVALEPLTAMLVAAAVVACSFCLT) are cleaved as a propeptide — removed in mature form.

It belongs to the SPACA4/bouncer family. Interacts with spermatocyte complex composed of izumo1, spaca6 and tmem81. Expressed in oocytes. Not expressed in testis.

The protein localises to the cell membrane. In terms of biological role, oocyte-expressed fertilization factor that mediates sperm-egg binding and is essential for sperm entry into the egg. Necessary and sufficient to mediate species-specific gamete recognition and fertilization, which is essential for vertebrate species performing external fertilization. External fertilization cannot guarantee that only conspecific sperm reaches the egg by precopulatory mate choice: proteins such as Bouncer can therefore support the selection of conspecific sperm. The protein is Protein Bouncer of Oryzias latipes (Japanese rice fish).